The following is a 500-amino-acid chain: NAD(P)H-quinone oxidoreductase chain 4, chloroplastic (500 aa).

The next 14 membrane-spanning stretches (helical) occupy residues 4–24 (FPWLTIIVVLPIFAGSSIFFF), 37–57 (ICICLLELLLTTYAFCYHFQL), 84–104 (GLSIGPILLTGFITTLATLAA), 111–129 (SRLFHFLMLAMYSGQIGSF), 134–154 (LLLFFIMWELELIPVYLLLSM), 167–187 (FILYTAGGSIFLLMGVPGMGL), 208–228 (ALEIIFYFGFLIAYAVKSPII), 242–262 (HYSTCMLLAGILLKMGAYGLV), 272–292 (AHSIFSPWLMIVGTIQIIYAA), 305–325 (IAYSSVSHMGFTIIGIGSITD), 330–350 (GAILQIISHGFIGAALFFLAG), 374–396 (IFTMFSSFSMASLALPGMSGFVA), 416–436 (ILITFVMAIGMILTPIYSLSM), and 462–482 (LFVSICIFLPVIGIGIYPDFV).

Belongs to the complex I subunit 4 family.

The protein localises to the plastid. The protein resides in the chloroplast thylakoid membrane. It catalyses the reaction a plastoquinone + NADH + (n+1) H(+)(in) = a plastoquinol + NAD(+) + n H(+)(out). The enzyme catalyses a plastoquinone + NADPH + (n+1) H(+)(in) = a plastoquinol + NADP(+) + n H(+)(out). This chain is NAD(P)H-quinone oxidoreductase chain 4, chloroplastic, found in Liriodendron tulipifera (Tuliptree).